A 427-amino-acid polypeptide reads, in one-letter code: Trigger factor (427 aa).

A PPIase FKBP-type domain is found at 163-248 (GDTVVIDFVG…IHEVKAKEVP (86 aa)).

The protein belongs to the FKBP-type PPIase family. Tig subfamily.

It is found in the cytoplasm. The catalysed reaction is [protein]-peptidylproline (omega=180) = [protein]-peptidylproline (omega=0). Its function is as follows. Involved in protein export. Acts as a chaperone by maintaining the newly synthesized protein in an open conformation. Functions as a peptidyl-prolyl cis-trans isomerase. The sequence is that of Trigger factor from Streptococcus pneumoniae (strain JJA).